An 819-amino-acid polypeptide reads, in one-letter code: Regulator of G-protein signaling rgs-7 (819 aa).

Residues 1–11 (MSDEDADEYDD) show a composition bias toward acidic residues. Disordered stretches follow at residues 1–51 (MSDE…EMLW), 112–135 (GDDS…GYGS), and 149–259 (SSTY…HNNE). Residues 32–44 (YQDTTESTGPSEA) are compositionally biased toward polar residues. A compositionally biased stretch (basic and acidic residues) spans 112–124 (GDDSSFRSRDRFV). Over residues 149–166 (SSTYSSSSEAHRLSSLRA) the composition is skewed to low complexity. Over residues 173-185 (QLTSTTTSFQPLS) the composition is skewed to polar residues. The span at 213 to 223 (RMYRKNPKYRR) shows a compositional bias: basic residues. Basic and acidic residues predominate over residues 234 to 259 (SRLEESTSQESERAVTPESWMEHNNE). In terms of domain architecture, C2 spans 290 to 429 (KHKDIRGIIF…KASQVVGDPF (140 aa)). Disordered regions lie at residues 515–594 (YRST…DDNG) and 617–640 (FTFS…EEDK). 3 stretches are compositionally biased toward polar residues: residues 517–533 (STGS…NLLD), 559–568 (PSITTTTSEN), and 617–632 (FTFS…NLRQ). In terms of domain architecture, RGS spans 682 to 800 (SFESLLNNKF…LRDRLFLDLL (119 aa)).

As to quaternary structure, interacts with egl-30.

Its function is as follows. Inhibits signal transduction by increasing the GTPase activity of G protein alpha subunit egl-30 (G-alpha(q)), thereby driving it into its inactive GDP-bound form. May organize egl-30 into a stable multiprotein signaling complex, and thereby persistently inhibit egl-30 when triggered by calcium or phospholipids. The chain is Regulator of G-protein signaling rgs-7 (rgs-7) from Caenorhabditis elegans.